A 159-amino-acid polypeptide reads, in one-letter code: Phosphopantetheine adenylyltransferase (159 aa).

T10 lines the substrate pocket. Residues 10 to 11 (TF) and H18 contribute to the ATP site. The substrate site is built by K42, L74, and R88. ATP contacts are provided by residues 89–91 (GLR), E99, and 124–130 (YSFISSS).

Belongs to the bacterial CoaD family. In terms of assembly, homohexamer. Mg(2+) is required as a cofactor.

The protein localises to the cytoplasm. The catalysed reaction is (R)-4'-phosphopantetheine + ATP + H(+) = 3'-dephospho-CoA + diphosphate. Its pathway is cofactor biosynthesis; coenzyme A biosynthesis; CoA from (R)-pantothenate: step 4/5. In terms of biological role, reversibly transfers an adenylyl group from ATP to 4'-phosphopantetheine, yielding dephospho-CoA (dPCoA) and pyrophosphate. The protein is Phosphopantetheine adenylyltransferase of Campylobacter hominis (strain ATCC BAA-381 / DSM 21671 / CCUG 45161 / LMG 19568 / NCTC 13146 / CH001A).